Here is a 634-residue protein sequence, read N- to C-terminus: Extracellular metalloproteinase MEP (634 aa).

An N-terminal signal peptide occupies residues 1–18 (MRGLLLAGALALPASVFA). Residues 19 to 245 (HPAHQSYGLN…IHGVVDYVAE (227 aa)) constitute a propeptide that is removed on maturation. Histidine 429 contacts Zn(2+). The active site involves glutamate 430. Zn(2+) is bound at residue histidine 433.

Belongs to the peptidase M36 family. It depends on Zn(2+) as a cofactor.

It localises to the secreted. Functionally, secreted metalloproteinase that allows assimilation of proteinaceous substrates and probably acts as a virulence factor. This chain is Extracellular metalloproteinase MEP (MEP), found in Neosartorya fischeri (strain ATCC 1020 / DSM 3700 / CBS 544.65 / FGSC A1164 / JCM 1740 / NRRL 181 / WB 181) (Aspergillus fischerianus).